The sequence spans 82 residues: Small ribosomal subunit protein bS20 (82 aa).

A disordered region spans residues 1–29 (MPNIKSAKKDLRRSRAAAVRNRAQRSALR). Low complexity predominate over residues 16 to 29 (AAAVRNRAQRSALR).

The protein belongs to the bacterial ribosomal protein bS20 family.

Its function is as follows. Binds directly to 16S ribosomal RNA. The chain is Small ribosomal subunit protein bS20 from Gemmatimonas aurantiaca (strain DSM 14586 / JCM 11422 / NBRC 100505 / T-27).